The primary structure comprises 200 residues: Ribosomal RNA large subunit methyltransferase E (200 aa).

S-adenosyl-L-methionine contacts are provided by G49, W51, D69, D87, and D111. K151 (proton acceptor) is an active-site residue.

It belongs to the class I-like SAM-binding methyltransferase superfamily. RNA methyltransferase RlmE family.

Its subcellular location is the cytoplasm. It carries out the reaction uridine(2552) in 23S rRNA + S-adenosyl-L-methionine = 2'-O-methyluridine(2552) in 23S rRNA + S-adenosyl-L-homocysteine + H(+). In terms of biological role, specifically methylates the uridine in position 2552 of 23S rRNA at the 2'-O position of the ribose in the fully assembled 50S ribosomal subunit. In Lawsonia intracellularis (strain PHE/MN1-00), this protein is Ribosomal RNA large subunit methyltransferase E.